The primary structure comprises 506 residues: Lysine--tRNA ligase (506 aa).

Glu-416 and Glu-423 together coordinate Mg(2+).

The protein belongs to the class-II aminoacyl-tRNA synthetase family. In terms of assembly, homodimer. Mg(2+) is required as a cofactor.

The protein resides in the cytoplasm. It carries out the reaction tRNA(Lys) + L-lysine + ATP = L-lysyl-tRNA(Lys) + AMP + diphosphate. The protein is Lysine--tRNA ligase of Pelotomaculum thermopropionicum (strain DSM 13744 / JCM 10971 / SI).